A 955-amino-acid chain; its full sequence is Mediator of RNA polymerase II transcription subunit 16 (955 aa).

Residues 855 to 874 (ALPETNANANANQNGKSSTQ) are disordered. Polar residues predominate over residues 857-873 (PETNANANANQNGKSST).

It belongs to the Mediator complex subunit 16 family. In terms of assembly, component of the Mediator complex.

The protein localises to the nucleus. Functionally, component of the Mediator complex, a coactivator involved in the regulated transcription of nearly all RNA polymerase II-dependent genes. Mediator functions as a bridge to convey information from gene-specific regulatory proteins to the basal RNA polymerase II transcription machinery. Mediator is recruited to promoters by direct interactions with regulatory proteins and serves as a scaffold for the assembly of a functional preinitiation complex with RNA polymerase II and the general transcription factors. The chain is Mediator of RNA polymerase II transcription subunit 16 (sin4) from Aspergillus fumigatus (strain ATCC MYA-4609 / CBS 101355 / FGSC A1100 / Af293) (Neosartorya fumigata).